We begin with the raw amino-acid sequence, 463 residues long: A-type ATP synthase subunit B (463 aa).

This sequence belongs to the ATPase alpha/beta chains family. Has multiple subunits with at least A(3), B(3), C, D, E, F, H, I and proteolipid K(x).

It localises to the cell membrane. In terms of biological role, component of the A-type ATP synthase that produces ATP from ADP in the presence of a proton gradient across the membrane. The B chain is a regulatory subunit. This chain is A-type ATP synthase subunit B, found in Thermococcus gammatolerans (strain DSM 15229 / JCM 11827 / EJ3).